A 460-amino-acid chain; its full sequence is Bifunctional protein GlmU (460 aa).

The segment at 1-228 (MKNYALVLAA…NSLAMGVNDL (228 aa)) is pyrophosphorylase. Residues 8–11 (LAAG), K22, Q72, and 77–78 (GT) each bind UDP-N-acetyl-alpha-D-glucosamine. D102 lines the Mg(2+) pocket. UDP-N-acetyl-alpha-D-glucosamine contacts are provided by G139, E154, N169, and N226. N226 is a Mg(2+) binding site. The tract at residues 229 to 249 (YAISKAEKYLREYINKDHMLN) is linker. The segment at 250–460 (GVSMINPETI…LISPKPKKEE (211 aa)) is N-acetyltransferase. UDP-N-acetyl-alpha-D-glucosamine contacts are provided by R331 and K349. H361 acts as the Proton acceptor in catalysis. UDP-N-acetyl-alpha-D-glucosamine is bound by residues Y364 and N375. Acetyl-CoA contacts are provided by residues 384 to 385 (NY), A421, and R438.

This sequence in the N-terminal section; belongs to the N-acetylglucosamine-1-phosphate uridyltransferase family. It in the C-terminal section; belongs to the transferase hexapeptide repeat family. As to quaternary structure, homotrimer. Requires Mg(2+) as cofactor.

It localises to the cytoplasm. The enzyme catalyses alpha-D-glucosamine 1-phosphate + acetyl-CoA = N-acetyl-alpha-D-glucosamine 1-phosphate + CoA + H(+). It catalyses the reaction N-acetyl-alpha-D-glucosamine 1-phosphate + UTP + H(+) = UDP-N-acetyl-alpha-D-glucosamine + diphosphate. The protein operates within nucleotide-sugar biosynthesis; UDP-N-acetyl-alpha-D-glucosamine biosynthesis; N-acetyl-alpha-D-glucosamine 1-phosphate from alpha-D-glucosamine 6-phosphate (route II): step 2/2. It functions in the pathway nucleotide-sugar biosynthesis; UDP-N-acetyl-alpha-D-glucosamine biosynthesis; UDP-N-acetyl-alpha-D-glucosamine from N-acetyl-alpha-D-glucosamine 1-phosphate: step 1/1. It participates in bacterial outer membrane biogenesis; LPS lipid A biosynthesis. Its function is as follows. Catalyzes the last two sequential reactions in the de novo biosynthetic pathway for UDP-N-acetylglucosamine (UDP-GlcNAc). The C-terminal domain catalyzes the transfer of acetyl group from acetyl coenzyme A to glucosamine-1-phosphate (GlcN-1-P) to produce N-acetylglucosamine-1-phosphate (GlcNAc-1-P), which is converted into UDP-GlcNAc by the transfer of uridine 5-monophosphate (from uridine 5-triphosphate), a reaction catalyzed by the N-terminal domain. This Acholeplasma laidlawii (strain PG-8A) protein is Bifunctional protein GlmU.